Consider the following 444-residue polypeptide: tRNA-2-methylthio-N(6)-dimethylallyladenosine synthase (444 aa).

The MTTase N-terminal domain maps to 2–119 (KKLYIRTFGC…LPSMLNEVLT (118 aa)). Cys11, Cys48, Cys82, Cys161, Cys165, and Cys168 together coordinate [4Fe-4S] cluster. The Radical SAM core domain occupies 147-379 (KTSSVTAFVS…QKTIDKNTER (233 aa)). Positions 382–444 (KSMVGSVQKI…GNSLVGNLIA (63 aa)) constitute a TRAM domain.

The protein belongs to the methylthiotransferase family. MiaB subfamily. As to quaternary structure, monomer. [4Fe-4S] cluster serves as cofactor.

It is found in the cytoplasm. The catalysed reaction is N(6)-dimethylallyladenosine(37) in tRNA + (sulfur carrier)-SH + AH2 + 2 S-adenosyl-L-methionine = 2-methylsulfanyl-N(6)-dimethylallyladenosine(37) in tRNA + (sulfur carrier)-H + 5'-deoxyadenosine + L-methionine + A + S-adenosyl-L-homocysteine + 2 H(+). In terms of biological role, catalyzes the methylthiolation of N6-(dimethylallyl)adenosine (i(6)A), leading to the formation of 2-methylthio-N6-(dimethylallyl)adenosine (ms(2)i(6)A) at position 37 in tRNAs that read codons beginning with uridine. In Ruthia magnifica subsp. Calyptogena magnifica, this protein is tRNA-2-methylthio-N(6)-dimethylallyladenosine synthase.